The sequence spans 388 residues: Succinate--CoA ligase [ADP-forming] subunit beta (388 aa).

The ATP-grasp domain maps to 9-244 (KQLFAEYGLP…PSQEDEREAH (236 aa)). Residues Lys46, 53 to 55 (GRG), Glu99, Thr102, and Glu107 each bind ATP. Mg(2+) is bound by residues Asn199 and Asp213. Residues Asn264 and 321–323 (GIV) each bind substrate.

This sequence belongs to the succinate/malate CoA ligase beta subunit family. As to quaternary structure, heterotetramer of two alpha and two beta subunits. Mg(2+) serves as cofactor.

The enzyme catalyses succinate + ATP + CoA = succinyl-CoA + ADP + phosphate. It catalyses the reaction GTP + succinate + CoA = succinyl-CoA + GDP + phosphate. It participates in carbohydrate metabolism; tricarboxylic acid cycle; succinate from succinyl-CoA (ligase route): step 1/1. Functionally, succinyl-CoA synthetase functions in the citric acid cycle (TCA), coupling the hydrolysis of succinyl-CoA to the synthesis of either ATP or GTP and thus represents the only step of substrate-level phosphorylation in the TCA. The beta subunit provides nucleotide specificity of the enzyme and binds the substrate succinate, while the binding sites for coenzyme A and phosphate are found in the alpha subunit. In Marinomonas sp. (strain MWYL1), this protein is Succinate--CoA ligase [ADP-forming] subunit beta.